Reading from the N-terminus, the 290-residue chain is ATP synthase gamma chain (290 aa).

It belongs to the ATPase gamma chain family. As to quaternary structure, F-type ATPases have 2 components, CF(1) - the catalytic core - and CF(0) - the membrane proton channel. CF(1) has five subunits: alpha(3), beta(3), gamma(1), delta(1), epsilon(1). CF(0) has three main subunits: a, b and c.

It is found in the cell membrane. Its function is as follows. Produces ATP from ADP in the presence of a proton gradient across the membrane. The gamma chain is believed to be important in regulating ATPase activity and the flow of protons through the CF(0) complex. This Roseiflexus castenholzii (strain DSM 13941 / HLO8) protein is ATP synthase gamma chain.